We begin with the raw amino-acid sequence, 139 residues long: Arsenate reductase (139 aa).

Catalysis depends on nucleophile residues Cys-10, Cys-82, and Cys-89. 2 disulfides stabilise this stretch: Cys-10-Cys-82 and Cys-82-Cys-89.

This sequence belongs to the low molecular weight phosphotyrosine protein phosphatase family. Thioredoxin-coupled ArsC subfamily.

The protein localises to the cytoplasm. It catalyses the reaction arsenate + [thioredoxin]-dithiol + H(+) = arsenite + [thioredoxin]-disulfide + H2O. In terms of biological role, catalyzes the reduction of arsenate [As(V)] to arsenite [As(III)]. In Oceanobacillus iheyensis (strain DSM 14371 / CIP 107618 / JCM 11309 / KCTC 3954 / HTE831), this protein is Arsenate reductase.